The sequence spans 122 residues: Large ribosomal subunit protein uL14 (122 aa).

The protein belongs to the universal ribosomal protein uL14 family. As to quaternary structure, part of the 50S ribosomal subunit. Forms a cluster with proteins L3 and L19. In the 70S ribosome, L14 and L19 interact and together make contacts with the 16S rRNA in bridges B5 and B8.

Binds to 23S rRNA. Forms part of two intersubunit bridges in the 70S ribosome. This chain is Large ribosomal subunit protein uL14, found in Chlamydia muridarum (strain MoPn / Nigg).